A 558-amino-acid polypeptide reads, in one-letter code: Dihydroxy-acid dehydratase (558 aa).

Asp78 contacts Mg(2+). Cys119 provides a ligand contact to [2Fe-2S] cluster. Residues Asp120 and Lys121 each contribute to the Mg(2+) site. Lys121 is subject to N6-carboxylysine. Residue Cys192 coordinates [2Fe-2S] cluster. Glu446 contributes to the Mg(2+) binding site. Ser472 serves as the catalytic Proton acceptor.

It belongs to the IlvD/Edd family. In terms of assembly, homodimer. The cofactor is [2Fe-2S] cluster. It depends on Mg(2+) as a cofactor.

It catalyses the reaction (2R)-2,3-dihydroxy-3-methylbutanoate = 3-methyl-2-oxobutanoate + H2O. It carries out the reaction (2R,3R)-2,3-dihydroxy-3-methylpentanoate = (S)-3-methyl-2-oxopentanoate + H2O. It participates in amino-acid biosynthesis; L-isoleucine biosynthesis; L-isoleucine from 2-oxobutanoate: step 3/4. The protein operates within amino-acid biosynthesis; L-valine biosynthesis; L-valine from pyruvate: step 3/4. In terms of biological role, functions in the biosynthesis of branched-chain amino acids. Catalyzes the dehydration of (2R,3R)-2,3-dihydroxy-3-methylpentanoate (2,3-dihydroxy-3-methylvalerate) into 2-oxo-3-methylpentanoate (2-oxo-3-methylvalerate) and of (2R)-2,3-dihydroxy-3-methylbutanoate (2,3-dihydroxyisovalerate) into 2-oxo-3-methylbutanoate (2-oxoisovalerate), the penultimate precursor to L-isoleucine and L-valine, respectively. In Campylobacter jejuni subsp. jejuni serotype O:23/36 (strain 81-176), this protein is Dihydroxy-acid dehydratase.